Consider the following 158-residue polypeptide: Endoribonuclease YbeY (158 aa).

The Zn(2+) site is built by H119, H123, and H129.

It belongs to the endoribonuclease YbeY family. Requires Zn(2+) as cofactor.

Its subcellular location is the cytoplasm. Its function is as follows. Single strand-specific metallo-endoribonuclease involved in late-stage 70S ribosome quality control and in maturation of the 3' terminus of the 16S rRNA. The chain is Endoribonuclease YbeY from Acinetobacter baumannii (strain AB307-0294).